The chain runs to 588 residues: Myc box-dependent-interacting protein 1 (588 aa).

Ala2 bears the N-acetylalanine mark. Positions 2 to 122 (AEMGSKGVTA…DYHQKLVDQA (121 aa)) are interaction with BIN2. 2 coiled-coil regions span residues 15 to 42 (ASNV…TKDE) and 193 to 274 (HLVA…EKQH). The BAR domain maps to 29–276 (VLQKLGKADE…LVSLEKQHGS (248 aa)). The tract at residues 279–355 (FTVKAQPSDS…PKHTPSKEMK (77 aa)) is disordered. Residues Ser296, Ser298, and Ser304 each carry the phosphoserine modification. Position 308 is a phosphothreonine (Thr308). Phosphoserine occurs at positions 324 and 332. The segment at 379 to 422 (FEAPGPFSEQASLLDLDFEPLPPVASPVKAPTPSGQSIPWDLWE) is clathrin-binding. Residues 448-483 (PSQTAEPGPAQPAEASEVVGGTQEPGETAASEATSS) form a disordered region. A compositionally biased stretch (low complexity) spans 474 to 483 (ETAASEATSS). Positions 515–588 (GFMFKVQAQH…FPENFTERVQ (74 aa)) constitute an SH3 domain.

As to quaternary structure, heterodimer with AMPH. Binds SH3GLB1. Interacts (via SH3 domain) with DNM1. Interacts with SYNJ1. Interacts (via SH3 domain) with DNM2. Interacts with CLTC. Interacts with AP2A2. Interacts with AP2B1. Interacts with MYC (via N-terminal transactivation domain); the interaction requires the integrity of the conserved MYC box regions 1 and 2. Interacts with BIN2. Interacts with SNX4. Interacts (via BAR domain) with BACE1. Binds (via BAR domain) F-actin. Post-translationally, phosphorylated by protein kinase C. In terms of tissue distribution, highly expressed in the brain and muscle. Isoform AMPH2-1 is expressed only in the brain where it is concentrated in axon initial segments and nodes of Ranvier. Isoform AMPH2-2 is widely expressed.

It localises to the nucleus. Its subcellular location is the cytoplasm. The protein localises to the endosome. It is found in the cell membrane. The protein resides in the sarcolemma. It localises to the T-tubule. In terms of biological role, is a key player in the control of plasma membrane curvature, and membrane shaping and remodeling. Required in muscle cells for the formation of T-tubules, tubular invaginations of the plasma membrane that function in depolarization-contraction coupling. Required in muscle cells for the formation of T-tubules, tubular invaginations of the plasma membrane that function in depolarization-contraction coupling. Is a negative regulator of endocytosis. Is also involved in the regulation of intracellular vesicles sorting, modulation of BACE1 trafficking and the control of amyloid-beta production. In neuronal circuits, endocytosis regulation may influence the internalization of PHF-tau aggregates. May be involved in the regulation of MYC activity and the control cell proliferation. This chain is Myc box-dependent-interacting protein 1 (Bin1), found in Rattus norvegicus (Rat).